The following is a 278-amino-acid chain: uncharacterized protein (278 aa).

It belongs to the short-chain dehydrogenases/reductases (SDR) family.

This is an uncharacterized protein from Bacillus subtilis (strain 168).